The primary structure comprises 429 residues: Queuine tRNA-ribosyltransferase accessory subunit 2 (429 aa).

Cys330, Cys332, Cys335, and His361 together coordinate Zn(2+).

Belongs to the queuine tRNA-ribosyltransferase family. QTRT2 subfamily. Heterodimer of a catalytic subunit and an accessory subunit. Zn(2+) serves as cofactor.

Its subcellular location is the cytoplasm. Non-catalytic subunit of the queuine tRNA-ribosyltransferase (TGT) that catalyzes the base-exchange of a guanine (G) residue with queuine (Q) at position 34 (anticodon wobble position) in tRNAs with GU(N) anticodons (tRNA-Asp, -Asn, -His and -Tyr), resulting in the hypermodified nucleoside queuosine (7-(((4,5-cis-dihydroxy-2-cyclopenten-1-yl)amino)methyl)-7-deazaguanosine). The chain is Queuine tRNA-ribosyltransferase accessory subunit 2 from Culex quinquefasciatus (Southern house mosquito).